We begin with the raw amino-acid sequence, 185 residues long: ADP-ribose 1''-phosphate phosphatase (185 aa).

The region spanning 1 to 185 (MSPARLRITD…VVEVVAWERA (185 aa)) is the Macro domain. Substrate-binding positions include 13–15 (GDL), 27–29 (ACN), 34–39 (WGGGIA), and 142–148 (INAGLFA).

It belongs to the POA1 family.

The catalysed reaction is ADP-alpha-D-ribose 1''-phosphate + H2O = ADP-D-ribose + phosphate. Functionally, highly specific phosphatase involved in the metabolism of ADP-ribose 1''-phosphate (Appr1p) which is produced as a consequence of tRNA splicing. This chain is ADP-ribose 1''-phosphate phosphatase (POA1), found in Chaetomium globosum (strain ATCC 6205 / CBS 148.51 / DSM 1962 / NBRC 6347 / NRRL 1970) (Soil fungus).